Here is a 423-residue protein sequence, read N- to C-terminus: Glycine amidinotransferase, mitochondrial (423 aa).

The transit peptide at 1–43 directs the protein to the mitochondrion; that stretch reads MLRVRCLRGGSRGAEALHYIGSRLGRTVTGWVQRTFQSTQAAT. 2 positions are modified to phosphoserine: serine 46 and serine 49. An arginine-binding site is contributed by aspartate 170. Residues aspartate 254 and histidine 303 contribute to the active site. Residues aspartate 305, arginine 322, serine 354, and serine 355 each contribute to the arginine site. Position 385 is an N6-acetyllysine (lysine 385). The active-site Amidino-cysteine intermediate is cysteine 407.

This sequence belongs to the amidinotransferase family. Homodimer. Kidney. Expressed biallelically in placenta.

Its subcellular location is the mitochondrion inner membrane. The catalysed reaction is L-arginine + glycine = guanidinoacetate + L-ornithine. The enzyme catalyses 4-aminobutanoate + L-arginine = 4-guanidinobutanoate + L-ornithine. It catalyses the reaction beta-alanine + L-arginine = 3-guanidinopropanoate + L-ornithine. It carries out the reaction taurine + L-arginine = taurocyamine + L-ornithine. The protein operates within amine and polyamine biosynthesis; creatine biosynthesis; creatine from L-arginine and glycine: step 1/2. Functionally, transamidinase that catalyzes the transfer of the amidino group of L-arginine onto the amino moiety of acceptor metabolites such as glycine, beta-alanine, gamma-aminobutyric acid (GABA) and taurine yielding the corresponding guanidine derivatives. Catalyzes the rate-limiting step of creatine biosynthesis, namely the transfer of the amidino group from L-arginine to glycine to generate guanidinoacetate, which is then methylated by GAMT to form creatine. Provides creatine as a source for ATP generation in tissues with high energy demands, in particular skeletal muscle, heart and brain. This is Glycine amidinotransferase, mitochondrial (GATM) from Sus scrofa (Pig).